Here is a 128-residue protein sequence, read N- to C-terminus: EPIDERMAL PATTERNING FACTOR-like protein 2 (128 aa).

An N-terminal signal peptide occupies residues 1–28 (MVWSSNMSSFLLILLILNSTHFSLMANG). 3 cysteine pairs are disulfide-bonded: Cys60-Cys119, Cys65-Cys71, and Cys68-Cys121. Positions 79-90 (NPQTKLHSPLTT) are enriched in polar residues. A disordered region spans residues 79–100 (NPQTKLHSPLTTSSSSSSETIH).

The protein belongs to the plant cysteine rich small secretory peptide family. Epidermal patterning factor subfamily.

The protein resides in the secreted. Functionally, controls stomatal patterning. The polypeptide is EPIDERMAL PATTERNING FACTOR-like protein 2 (Arabidopsis thaliana (Mouse-ear cress)).